Reading from the N-terminus, the 344-residue chain is Arginase 2, chloroplastic/mitochondrial (344 aa).

The N-terminal 26 residues, 1-26 (MWKIGQRGVPYFQRLIAAPFTTLRSL), are a transit peptide targeting the chloroplast and mitochondrion. 4 residues coordinate Mn(2+): histidine 163, aspartate 187, histidine 189, and aspartate 191. Substrate contacts are provided by residues 189–193 (HPDIY), 197–199 (EGN), and asparagine 228. Residues aspartate 272 and aspartate 274 each coordinate Mn(2+). Glutamate 315 serves as a coordination point for substrate.

It belongs to the arginase family. Mn(2+) serves as cofactor. As to expression, expressed in vasculature of roots, root tips, leaves and cotyledons.

The protein localises to the mitochondrion. It is found in the plastid. Its subcellular location is the chloroplast. It carries out the reaction L-arginine + H2O = urea + L-ornithine. The enzyme catalyses agmatine + H2O = urea + putrescine. It functions in the pathway nitrogen metabolism; urea cycle; L-ornithine and urea from L-arginine: step 1/1. The protein operates within amine and polyamine biosynthesis; putrescine biosynthesis via agmatine pathway; putrescine from agmatine: step 1/1. Catalyzes the hydrolysis of L-arginine to urea and L-ornithine. The latter can be utilized in the urea cycle or as a precursor for the synthesis of both polyamines and proline. Possesses agmatinase activity. Catalyzes the formation of putrescine from agmatine. This chain is Arginase 2, chloroplastic/mitochondrial (ARGAH2), found in Arabidopsis thaliana (Mouse-ear cress).